A 144-amino-acid chain; its full sequence is D-aminoacyl-tRNA deacylase (144 aa).

The short motif at 136–137 (GP) is the Gly-cisPro motif, important for rejection of L-amino acids element.

The protein belongs to the DTD family. As to quaternary structure, homodimer.

It localises to the cytoplasm. The catalysed reaction is glycyl-tRNA(Ala) + H2O = tRNA(Ala) + glycine + H(+). It carries out the reaction a D-aminoacyl-tRNA + H2O = a tRNA + a D-alpha-amino acid + H(+). Its function is as follows. An aminoacyl-tRNA editing enzyme that deacylates mischarged D-aminoacyl-tRNAs. Also deacylates mischarged glycyl-tRNA(Ala), protecting cells against glycine mischarging by AlaRS. Acts via tRNA-based rather than protein-based catalysis; rejects L-amino acids rather than detecting D-amino acids in the active site. By recycling D-aminoacyl-tRNA to D-amino acids and free tRNA molecules, this enzyme counteracts the toxicity associated with the formation of D-aminoacyl-tRNA entities in vivo and helps enforce protein L-homochirality. The sequence is that of D-aminoacyl-tRNA deacylase from Histophilus somni (strain 129Pt) (Haemophilus somnus).